A 168-amino-acid polypeptide reads, in one-letter code: Small ribosomal subunit protein uS5 (168 aa).

Residues 12-75 (YQEKLVSVTR…DQAKKNMVYI (64 aa)) form the S5 DRBM domain.

Belongs to the universal ribosomal protein uS5 family. Part of the 30S ribosomal subunit. Contacts proteins S4 and S8.

In terms of biological role, with S4 and S12 plays an important role in translational accuracy. Functionally, located at the back of the 30S subunit body where it stabilizes the conformation of the head with respect to the body. This chain is Small ribosomal subunit protein uS5, found in Legionella pneumophila (strain Paris).